Here is a 987-residue protein sequence, read N- to C-terminus: Mediator of RNA polymerase II transcription subunit 24 (987 aa).

6 consecutive short sequence motifs (LXXLL motif) follow at residues 128 to 132 (LHWLL), 344 to 348 (LTPLL), 446 to 450 (LDLLL), 555 to 559 (LVALL), 786 to 790 (LPGLL), and 855 to 859 (LMRLL). Ser860 and Ser871 each carry phosphoserine.

Belongs to the Mediator complex subunit 24 family. As to quaternary structure, component of the Mediator complex, which is composed of MED1, MED4, MED6, MED7, MED8, MED9, MED10, MED11, MED12, MED13, MED13L, MED14, MED15, MED16, MED17, MED18, MED19, MED20, MED21, MED22, MED23, MED24, MED25, MED26, MED27, MED29, MED30, MED31, CCNC, CDK8 and CDC2L6/CDK11. The MED12, MED13, CCNC and CDK8 subunits form a distinct module termed the CDK8 module. Mediator containing the CDK8 module is less active than Mediator lacking this module in supporting transcriptional activation. Individual preparations of the Mediator complex lacking one or more distinct subunits have been variously termed ARC, CRSP, DRIP, PC2, SMCC and TRAP. Interacts with AR. Interacts with MED1 and MED10. Expressed in the adrenal gland, brain, epididymis, heart, kidney, liver, ovary, pancreas, prostate, skeletal muscle, small intestine, spleen, stomach, testis and thymus.

Its subcellular location is the nucleus. Its function is as follows. Component of the Mediator complex, a coactivator involved in the regulated transcription of nearly all RNA polymerase II-dependent genes. Mediator functions as a bridge to convey information from gene-specific regulatory proteins to the basal RNA polymerase II transcription machinery. Mediator is recruited to promoters by direct interactions with regulatory proteins and serves as a scaffold for the assembly of a functional preinitiation complex with RNA polymerase II and the general transcription factors. Required for basal and activator-dependent transcription. In Mus musculus (Mouse), this protein is Mediator of RNA polymerase II transcription subunit 24 (Med24).